We begin with the raw amino-acid sequence, 535 residues long: MRHFTYHSDVVVWQYIFESGAATNYITRGRALKKLQLSLKDFRRLCILKGVYPHEPLHKKKVNKGSTENRVYYYAKDINFLASEPIIRKFREYKIFLRKLTTAKAKRDEERIKTLYENRPEYQLDHIVKERYPTFESALRDLDDALCLLFAFAVLPHTKIITSSLVASSRRLTAEFNHYIIESNSLNKVFVSIKGIYYEAEVMGERVTWIVGHDRGMGHVSEVDFSVMATFAEFYVTMLEFVNFRLYQSVGLFYPPKLAFKSDKLEDDDQAEEGRVYSLACPLSKFENYEEQIDASIGDEVDNVLNEKLCDVEKRKQLFANYRFWLNREVPKDVLAIIIRSCGGLVSWENCPAAQYYENDAQITHQIVDRPLLDSHKNISRCYVQPQWVFDSFNRRSCLSIKKYLPGAILPPHLSPFSSDYDTYEEQLNQLRLLSKASANVTNRMETEAENKVQERKKIQKEKEVPIINVNKGRMHKENLQKKLNEKGHELKLREMLIPKKRRRVYSKIKRGIKRRVHEEKKLNEKRLKMLKAAD.

The region spanning 314–406 (KRKQLFANYR…SCLSIKKYLP (93 aa)) is the BRCT domain.

This sequence belongs to the pescadillo family.

The protein localises to the nucleus. The protein resides in the nucleolus. It is found in the nucleoplasm. In terms of biological role, required for maturation of ribosomal RNAs and formation of the large ribosomal subunit. This Brugia malayi (Filarial nematode worm) protein is Pescadillo homolog.